A 110-amino-acid polypeptide reads, in one-letter code: Ribonuclease P protein component 1 (110 aa).

It belongs to the eukaryotic/archaeal RNase P protein component 1 family. In terms of assembly, consists of a catalytic RNA component and at least 4-5 protein subunits.

The protein resides in the cytoplasm. The enzyme catalyses Endonucleolytic cleavage of RNA, removing 5'-extranucleotides from tRNA precursor.. In terms of biological role, part of ribonuclease P, a protein complex that generates mature tRNA molecules by cleaving their 5'-ends. The sequence is that of Ribonuclease P protein component 1 from Methanosarcina barkeri (strain Fusaro / DSM 804).